Reading from the N-terminus, the 305-residue chain is Protoheme IX farnesyltransferase (305 aa).

The next 9 membrane-spanning stretches (helical) occupy residues 29–49 (VTQLAVFCAIIGMFLATPGMV), 51–71 (WSVLIGGAAGIWLLAGAAFAI), 101–121 (TLIFSAVLGGAGMWLLHVFAN), 123–143 (LTMWLTFATFLGYAVVYTILL), 151–171 (IVIGGLSGAMPPALGWSAVSG), 177–197 (AWFLVLIIFTWTPPHFWALAL), 221–241 (LLHILLYTLIMIAATLLPFVY), 244–264 (SGYIYLVAALGLGLVFLGYAW), and 283–303 (ILYLSLLFAVLLVDHYFKFVP).

The protein belongs to the UbiA prenyltransferase family. Protoheme IX farnesyltransferase subfamily.

The protein localises to the cell inner membrane. The enzyme catalyses heme b + (2E,6E)-farnesyl diphosphate + H2O = Fe(II)-heme o + diphosphate. It participates in porphyrin-containing compound metabolism; heme O biosynthesis; heme O from protoheme: step 1/1. Its function is as follows. Converts heme B (protoheme IX) to heme O by substitution of the vinyl group on carbon 2 of heme B porphyrin ring with a hydroxyethyl farnesyl side group. This Cupriavidus metallidurans (strain ATCC 43123 / DSM 2839 / NBRC 102507 / CH34) (Ralstonia metallidurans) protein is Protoheme IX farnesyltransferase.